An 802-amino-acid polypeptide reads, in one-letter code: DSC E3 ubiquitin ligase complex subunit A (802 aa).

Residues 1–22 (MDNRGSFFFLLIVFYLLLSSQS) form the signal peptide. At 23-381 (RPPLLDQDRE…TGPKIEEYDK (359 aa)) the chain is on the lumenal side. N-linked (GlcNAc...) asparagine glycosylation is found at asparagine 48, asparagine 71, asparagine 115, asparagine 126, asparagine 148, and asparagine 166. The helical transmembrane segment at 382–402 (YSARLVFIICGVFAAQITLLL) threads the bilayer. Topologically, residues 403–429 (RQIKEASTPSTRSRISFYTIALMAFGD) are cytoplasmic. Residues 430-450 (AFVLIFILLELYPAVSFLVMA) form a helical membrane-spanning segment. At 451–453 (TAA) the chain is on the lumenal side. A helical membrane pass occupies residues 454 to 474 (FLTFLSVSYIGMKFMMEIWAV). Topologically, residues 475-550 (QAPERREQER…QETRNDVGAM (76 aa)) are cytoplasmic. A disordered region spans residues 478 to 541 (ERREQERRSN…TNRGTTSAAQ (64 aa)). Over residues 532-541 (TNRGTTSAAQ) the composition is skewed to polar residues. The helical transmembrane segment at 551-571 (YARFYFVLFVMLIISIWSFLW) threads the bilayer. The Lumenal segment spans residues 572 to 574 (PNR). A helical membrane pass occupies residues 575 to 595 (LGALYARALAFVYLSFWTPQI). The Cytoplasmic segment spans residues 596 to 608 (GRNIIRNCRKALR). The helical transmembrane segment at 609 to 629 (WDFVIGQSILRLFPFVYFLTV) threads the bilayer. Residues 630-642 (RGNVLFIHPDTTT) are Lumenal-facing. Residues 643-663 (AFALAGWVWIQVWVLASQDIL) traverse the membrane as a helical segment. The Cytoplasmic segment spans residues 664–802 (GPRFFVPRGW…PICRESIPPV (139 aa)). Residues 732 to 796 (CAICMQEIEV…RLRLQCPICR (65 aa)) form an RING-type; atypical zinc finger.

As to quaternary structure, component of the DSC E3 ubiquitin ligase complex composed of dscA, dscB, dscC and dscD.

Its subcellular location is the endoplasmic reticulum membrane. It catalyses the reaction S-ubiquitinyl-[E2 ubiquitin-conjugating enzyme]-L-cysteine + [acceptor protein]-L-lysine = [E2 ubiquitin-conjugating enzyme]-L-cysteine + N(6)-ubiquitinyl-[acceptor protein]-L-lysine.. Its pathway is protein modification; protein ubiquitination. Functionally, catalytic component of the DSC E3 ubiquitin ligase complex which is required for the srbA transcriptional activator proteolytic cleavage to release the soluble transcription factor from the membrane in low oxygen or sterol conditions. Required for growth during hypoxia and triazole drug susceptibility, as well as for virulence in a murine model of invasive pulmonary aspergillosis (IPA). The chain is DSC E3 ubiquitin ligase complex subunit A from Aspergillus fumigatus (strain CBS 144.89 / FGSC A1163 / CEA10) (Neosartorya fumigata).